Consider the following 121-residue polypeptide: uncharacterized protein (121 aa).

This is an uncharacterized protein from Archaeoglobus fulgidus (strain ATCC 49558 / DSM 4304 / JCM 9628 / NBRC 100126 / VC-16).